The chain runs to 349 residues: Hypoxia-inducible factor 1-alpha inhibitor (349 aa).

Over residues 1 to 10 the composition is skewed to low complexity; the sequence is MAATAAEAVA. The segment at 1-51 is disordered; it reads MAATAAEAVASGSGEPREEAGALGPAWDESQLRSYSFPTRPIPRLSQSDPR. The residue at position 2 (Ala2) is an N-acetylalanine. Positions 2–125 are interaction with VHL; the sequence is AATAAEAVAS…PRSNREEMKF (124 aa). In terms of domain architecture, JmjC spans 142–312; sequence ERLYLQQTLN…PKRIEYPLKA (171 aa). Tyr145 contacts 2-oxoglutarate. Substrate is bound by residues Asp152 and 181 to 183; that span reads QLT. Thr196 is a 2-oxoglutarate binding site. Positions 199 and 201 each coordinate Fe cation. 201–203 is a substrate binding site; sequence DEQ. Residues Asn205 and Lys214 each coordinate 2-oxoglutarate. 238-239 provides a ligand contact to substrate; the sequence is RQ. His279 contacts Fe cation. Asn294 is a 2-oxoglutarate binding site. Residues Ala300 and Asn321 each contribute to the substrate site.

Homodimer; homodimerization is essential for catalytic activity. Interacts with VHL and HIF1A. Part of a complex with VHL, HIF1A and HDAC1 or HDAC2 or HDAC3. Interacts with NFKB1 and NFKBIA. Interacts with NOTCH1, NOTCH2 and NOTCH3 but not with NOTCH4. Interacts with APBA3; binding inhibits HIF1AN binding to HIF1A. Interacts with TNKS2. Interacts with PPP1R12A. Interacts with ASB4. Interacts with UBE3A. Interacts with ANKS3. Interacts with NECAB3; the interaction is indirect and seems to be mediated by APBA3. The cofactor is Fe(2+).

The protein resides in the nucleus. The protein localises to the cytoplasm. Its subcellular location is the perinuclear region. It catalyses the reaction L-asparaginyl-[hypoxia-inducible factor alpha subunit] + 2-oxoglutarate + O2 = (3S)-3-hydroxy-L-asparaginyl-[hypoxia-inducible factor alpha subunit] + succinate + CO2. It carries out the reaction L-histidyl-[ankyrin-repeat domain protein] + 2-oxoglutarate + O2 = (3S)-3-hydroxy-L-histidyl-[ankyrin-repeat domain protein] + succinate + CO2. The catalysed reaction is L-asparaginyl-[ankyrin-repeat domain protein] + 2-oxoglutarate + O2 = (3S)-3-hydroxy-L-asparaginyl-[ankyrin-repeat domain protein] + succinate + CO2. The enzyme catalyses L-aspartyl-[ankyrin-repeat domain protein] + 2-oxoglutarate + O2 = (3S)-3-hydroxy-L-aspartyl-[ankyrin-repeat domain protein] + succinate + CO2. Hydroxylates HIF-1 alpha at 'Asn-803' in the C-terminal transactivation domain (CAD). Functions as an oxygen sensor and, under normoxic conditions, the hydroxylation prevents interaction of HIF-1 with transcriptional coactivators including Cbp/p300-interacting transactivator. Involved in transcriptional repression through interaction with HIF1A, VHL and histone deacetylases. Hydroxylates specific Asn residues within ankyrin repeat domains (ARD) of NFKB1, NFKBIA, NOTCH1, ASB4, PPP1R12A and several other ARD-containing proteins. Also hydroxylates Asp and His residues within ARDs of ANK1 and TNKS2, respectively. Negatively regulates NOTCH1 activity, accelerating myogenic differentiation. Positively regulates ASB4 activity, promoting vascular differentiation. The protein is Hypoxia-inducible factor 1-alpha inhibitor (HIF1AN) of Homo sapiens (Human).